The sequence spans 552 residues: Transcription factor lcsF (552 aa).

4 disordered regions span residues 1–132, 169–209, 232–258, and 297–349; these read MAPA…DLDP, TSSY…ASLS, EATSTTHKEEGSAAKSPGALQQSHWSS, and ELTS…QHGA. A basic motif region spans residues 31-55; that stretch reads KDRKEKKRIQNRVAQRSYRSRMKAR. The region spanning 31–76 is the bZIP domain; the sequence is KDRKEKKRIQNRVAQRSYRSRMKARLGELQSRLQAHEEQKAKEEAE. The interval 56–63 is leucine-zipper; sequence LGELQSRL. The span at 64–79 shows a compositional bias: basic and acidic residues; sequence QAHEEQKAKEEAERCD. Composition is skewed to polar residues over residues 98-119 and 169-186; these read TPPSGNNAGANDTEPSSINSAS and TSSYIQPSVPTPPVSLSQ. The span at 298–347 shows a compositional bias: polar residues; that stretch reads LTSTGDLPNATWRPSQQFSGPETTPRSHNAENPTQQQSPINDDTPSTTQH.

The protein belongs to the bZIP family.

It is found in the nucleus. In terms of biological role, transcription factor that regulates the expression of the gene cluster that mediates the biosynthesis of the lipopeptide antibiotics leucinostatins that show extensive biological activities, including antimalarial, antiviral, antibacterial, antifungal, and antitumor activities, as well as phytotoxic. All 20 genes in the cluster are up-regulated to some extent by lcsF, with the exception of lcsL and lcsP, which are down-regulated. The polypeptide is Transcription factor lcsF (Purpureocillium lilacinum (Paecilomyces lilacinus)).